Here is a 153-residue protein sequence, read N- to C-terminus: Nucleoside diphosphate kinase 3 (153 aa).

Positions 11, 59, 87, 93, 104, and 114 each coordinate ATP. Catalysis depends on histidine 117, which acts as the Pros-phosphohistidine intermediate.

Belongs to the NDK family. In terms of assembly, homohexamer. Requires Mg(2+) as cofactor.

The protein localises to the plastid. It localises to the chloroplast thylakoid lumen. The enzyme catalyses a 2'-deoxyribonucleoside 5'-diphosphate + ATP = a 2'-deoxyribonucleoside 5'-triphosphate + ADP. It catalyses the reaction a ribonucleoside 5'-diphosphate + ATP = a ribonucleoside 5'-triphosphate + ADP. In terms of biological role, major role in the synthesis of nucleoside triphosphates other than ATP. The ATP gamma phosphate is transferred to the NDP beta phosphate via a ping-pong mechanism, using a phosphorylated active-site intermediate. Shows the highest specificity towards GDP. This Spinacia oleracea (Spinach) protein is Nucleoside diphosphate kinase 3.